Consider the following 145-residue polypeptide: Superoxide dismutase [Cu-Zn] (145 aa).

Cu cation-binding residues include His-37, His-39, and His-54. Cys-48 and Cys-137 form a disulfide bridge. Zn(2+) contacts are provided by His-54, His-62, His-71, and Asp-74. Residue His-111 coordinates Cu cation.

The protein belongs to the Cu-Zn superoxide dismutase family. Homodimer. It depends on Cu cation as a cofactor. The cofactor is Zn(2+).

It localises to the cytoplasm. It catalyses the reaction 2 superoxide + 2 H(+) = H2O2 + O2. Functionally, destroys radicals which are normally produced within the cells and which are toxic to biological systems. In Drosophila busckii (Fruit fly), this protein is Superoxide dismutase [Cu-Zn].